We begin with the raw amino-acid sequence, 183 residues long: Photosystem I assembly protein Ycf4 (183 aa).

2 helical membrane-spanning segments follow: residues 21–43 (YWWA…SSRL) and 58–80 (FIPQ…TYLW).

It belongs to the Ycf4 family.

It is found in the plastid. It localises to the chloroplast thylakoid membrane. Seems to be required for the assembly of the photosystem I complex. The protein is Photosystem I assembly protein Ycf4 of Nephroselmis olivacea (Green alga).